The sequence spans 477 residues: Pyruvate kinase (477 aa).

Arg-34 provides a ligand contact to substrate. The K(+) site is built by Asn-36, Asp-64, and Thr-65. 36–39 (NTAH) provides a ligand contact to ATP. ATP-binding residues include Arg-71 and Lys-150. Glu-216 is a binding site for Mg(2+). 3 residues coordinate substrate: Gly-239, Asp-240, and Thr-272. Asp-240 provides a ligand contact to Mg(2+).

The protein belongs to the pyruvate kinase family. Homotetramer. Mg(2+) serves as cofactor. K(+) is required as a cofactor.

It carries out the reaction pyruvate + ATP = phosphoenolpyruvate + ADP + H(+). Its pathway is carbohydrate degradation; glycolysis; pyruvate from D-glyceraldehyde 3-phosphate: step 5/5. The sequence is that of Pyruvate kinase (pyk) from Borreliella burgdorferi (strain ATCC 35210 / DSM 4680 / CIP 102532 / B31) (Borrelia burgdorferi).